The following is a 1420-amino-acid chain: tRNA (32-2'-O)-methyltransferase regulator TRM732 (1420 aa).

Positions 748-754 (RRSGGLP) are required for activity.

The protein belongs to the THADA family. Interacts with TRM7; for 2'-O-methylation of position 32 in substrate tRNAs.

The protein resides in the cytoplasm. Functionally, together with methyltransferase TRM7, methylates the 2'-O-ribose of nucleotides at position 32 of the anticodon loop of substrate tRNAs. This is tRNA (32-2'-O)-methyltransferase regulator TRM732 (TRM732) from Saccharomyces cerevisiae (strain ATCC 204508 / S288c) (Baker's yeast).